The sequence spans 169 residues: Photosystem I assembly protein Ycf3 (169 aa).

TPR repeat units lie at residues 35–68 (AFSYYRDGMSAQSEGEYAEALQNYYEAMRLEIDP), 72–105 (SYILYNIGLIHTSNGQHTKALEYYLQALERNPAL), and 120–153 (GEQAIQQGDPENAEAWFDQAADYWKQGIALAPSN).

The protein belongs to the Ycf3 family.

Its subcellular location is the plastid. It is found in the chloroplast thylakoid membrane. Essential for the assembly of the photosystem I (PSI) complex. May act as a chaperone-like factor to guide the assembly of the PSI subunits. The sequence is that of Photosystem I assembly protein Ycf3 from Chaetosphaeridium globosum (Charophycean green alga).